A 183-amino-acid chain; its full sequence is Bifunctional protein PyrR (183 aa).

The PRPP-binding signature appears at 102–114; the sequence is VVLVDDVLFSGRT.

The protein belongs to the purine/pyrimidine phosphoribosyltransferase family. PyrR subfamily.

It catalyses the reaction UMP + diphosphate = 5-phospho-alpha-D-ribose 1-diphosphate + uracil. Its function is as follows. Regulates the transcription of the pyrimidine nucleotide (pyr) operon in response to exogenous pyrimidines. In terms of biological role, also displays a weak uracil phosphoribosyltransferase activity which is not physiologically significant. In Leifsonia xyli subsp. xyli (strain CTCB07), this protein is Bifunctional protein PyrR.